We begin with the raw amino-acid sequence, 104 residues long: MASEKSYKTVPVTGKNLAMIYHHMGNKTQSLEEAYKQLEKELGETQAPPPSPQSSLDGEPLSEGELEEISEEEEEEGEAPPPIPAKKRQRKNPSKAPAAKAPSK.

The tract at residues 35-104 is disordered; the sequence is YKQLEKELGE…KAPAAKAPSK (70 aa). Over residues 60–78 the composition is skewed to acidic residues; the sequence is PLSEGELEEISEEEEEEGE. The span at 94–104 shows a compositional bias: low complexity; the sequence is SKAPAAKAPSK.

The chain is Putative protein 22K from Snake adenovirus serotype 1 (SnAdV-1).